The chain runs to 1049 residues: Toll-like receptor 7 (1049 aa).

Residues 1–26 (MVFPMWTLKRQILILFNIILISKLLG) form the signal peptide. The Extracellular segment spans residues 27-839 (ARWFPKTLPC…LYTCELDLTN (813 aa)). 6 LRR repeats span residues 43-64 (PKNH…GGIP), 65-87 (TNTT…SFHR), 110-126 (NMCI…FSGL), 127-149 (TYLK…LPPS), 151-170 (QLLS…NLTE), and 171-195 (LANI…SYSI). 2 N-linked (GlcNAc...) asparagine glycosylation sites follow: asparagine 66 and asparagine 69. N-linked (GlcNAc...) asparagine glycosylation is present at asparagine 167. N-linked (GlcNAc...) asparagine glycosylation is found at asparagine 202 and asparagine 215. 9 LRR repeats span residues 203 to 226 (LTKL…LPST), 228 to 247 (TELY…DFNN), 248 to 275 (LNQL…PCKN), 289 to 312 (LTEL…WFKN), 314 to 337 (NKLQ…KFLH), 339 to 368 (LPSL…AFSS), 369 to 392 (LKSL…NLSP), 396 to 419 (LQNL…MFKQ), and 421 to 443 (KRLK…SEVG). Asparagine 361 carries N-linked (GlcNAc...) asparagine glycosylation. An N-linked (GlcNAc...) asparagine glycan is attached at asparagine 413. Asparagine 488 carries an N-linked (GlcNAc...) asparagine glycan. LRR repeat units follow at residues 492–515 (YKYG…DFQH), 516–540 (LSFL…EFQP), 541–564 (LAEL…AFEE), and 566–588 (HKLE…ITHM). Asparagine 523 and asparagine 534 each carry an N-linked (GlcNAc...) asparagine glycan. An N-linked (GlcNAc...) asparagine glycan is attached at asparagine 590. LRR repeat units lie at residues 595-618 (LKVL…TMES), 619-644 (ESLR…RYLQ), 649-672 (LLKL…VFDG), 674-697 (PPNL…KLQC), 698-721 (LKNL…LSNC), 723-745 (RSLK…FLQD), 746-769 (AFQL…SFPE), and 772-795 (LNNL…VWFV). N-linked (GlcNAc...) asparagine glycans are attached at residues asparagine 679 and asparagine 720. An N-linked (GlcNAc...) asparagine glycan is attached at asparagine 799. Residues 840–860 (LILFSLSISVSLFLMVMMTAS) traverse the membrane as a helical segment. Residues 861–1049 (HLYFWDVWYI…AYSQVFKETV (189 aa)) lie on the Cytoplasmic side of the membrane. The 145-residue stretch at 889–1033 (CCYDAFIVYD…YFWQCLKNAL (145 aa)) folds into the TIR domain.

Belongs to the Toll-like receptor family. In terms of assembly, homodimer. Interacts with MYD88 via their respective TIR domains. Interacts with UNC93B1. Interacts with SMPDL3B. In terms of tissue distribution, detected in brain, placenta, spleen, stomach, small intestine, lung and in plasmacytoid pre-dendritic cells. Expressed in peripheral mononuclear blood cells.

The protein resides in the endoplasmic reticulum membrane. It is found in the endosome. Its subcellular location is the lysosome. It localises to the cytoplasmic vesicle. The protein localises to the phagosome. Its activity is regulated as follows. Activated by guanosine analogs including deoxyguanosine, 7-thia-8-oxoguanosine or 7-deazaguanosine in a RNA-independent manner. Activated by imiquimod. Its function is as follows. Endosomal receptor that plays a key role in innate and adaptive immunity. Controls host immune response against pathogens through recognition of uridine-containing single strand RNAs (ssRNAs) of viral origin or guanosine analogs. Upon binding to agonists, undergoes dimerization that brings TIR domains from the two molecules into direct contact, leading to the recruitment of TIR-containing downstream adapter MYD88 through homotypic interaction. In turn, the Myddosome signaling complex is formed involving IRAK4, IRAK1, TRAF6, TRAF3 leading to activation of downstream transcription factors NF-kappa-B and IRF7 to induce pro-inflammatory cytokines and interferons, respectively. In plasmacytoid dendritic cells, RNASET2 endonuclease cooperates with PLD3 or PLD4 5'-&gt;3' exonucleases to process RNA and release 2',3'-cyclic guanosine monophosphate (2',3'-cGMP) and cytidine-rich RNA fragments that occupy TLR7 ligand-binding pockets and trigger a signaling-competent state. The protein is Toll-like receptor 7 of Homo sapiens (Human).